Here is a 604-residue protein sequence, read N- to C-terminus: Arginine--tRNA ligase (604 aa).

The 'HIGH' region motif lies at 142 to 152 (PNIAKEMHVGH).

The protein belongs to the class-I aminoacyl-tRNA synthetase family. In terms of assembly, monomer.

The protein localises to the cytoplasm. It catalyses the reaction tRNA(Arg) + L-arginine + ATP = L-arginyl-tRNA(Arg) + AMP + diphosphate. This Prochlorococcus marinus (strain MIT 9312) protein is Arginine--tRNA ligase.